A 144-amino-acid polypeptide reads, in one-letter code: Large ribosomal subunit protein uL15 (144 aa).

A disordered region spans residues 1–52 (MRLNTLSPAEGAKHAPKRVGRGIGSGLGKTAGRGHKGQNSRSGGGVRRGFEG). Residues 21-31 (RGIGSGLGKTA) are compositionally biased toward gly residues.

Belongs to the universal ribosomal protein uL15 family. As to quaternary structure, part of the 50S ribosomal subunit.

In terms of biological role, binds to the 23S rRNA. This is Large ribosomal subunit protein uL15 from Yersinia pseudotuberculosis serotype O:1b (strain IP 31758).